The chain runs to 272 residues: Protein SSO0103 (272 aa).

The protein belongs to the CinA family.

This chain is Protein SSO0103, found in Saccharolobus solfataricus (strain ATCC 35092 / DSM 1617 / JCM 11322 / P2) (Sulfolobus solfataricus).